The primary structure comprises 258 residues: UPF0246 protein VV0659 (258 aa).

Belongs to the UPF0246 family.

This is UPF0246 protein VV0659 from Vibrio vulnificus (strain YJ016).